The sequence spans 476 residues: Adenosylhomocysteinase (476 aa).

Substrate is bound by residues Thr62, Asp141, and Glu201. 202–204 is an NAD(+) binding site; the sequence is TTT. Substrate contacts are provided by Lys231 and Asp235. NAD(+) is bound by residues Asn236, 265–270, Glu288, Asn323, 344–346, and Asn389; these read GYGDVG and IGH.

This sequence belongs to the adenosylhomocysteinase family. It depends on NAD(+) as a cofactor.

It localises to the cytoplasm. It catalyses the reaction S-adenosyl-L-homocysteine + H2O = L-homocysteine + adenosine. Its pathway is amino-acid biosynthesis; L-homocysteine biosynthesis; L-homocysteine from S-adenosyl-L-homocysteine: step 1/1. Functionally, may play a key role in the regulation of the intracellular concentration of adenosylhomocysteine. This chain is Adenosylhomocysteinase, found in Delftia acidovorans (strain DSM 14801 / SPH-1).